A 288-amino-acid polypeptide reads, in one-letter code: Probable ketoamine kinase VV1_2562 (288 aa).

92-94 (NFL) contacts ATP. D195 acts as the Proton acceptor in catalysis.

The protein belongs to the fructosamine kinase family.

Ketoamine kinase that phosphorylates ketoamines on the third carbon of the sugar moiety to generate ketoamine 3-phosphate. The sequence is that of Probable ketoamine kinase VV1_2562 from Vibrio vulnificus (strain CMCP6).